The sequence spans 144 residues: ATP synthase epsilon chain (144 aa).

The protein belongs to the ATPase epsilon chain family. F-type ATPases have 2 components, CF(1) - the catalytic core - and CF(0) - the membrane proton channel. CF(1) has five subunits: alpha(3), beta(3), gamma(1), delta(1), epsilon(1). CF(0) has three main subunits: a, b and c.

Its subcellular location is the cell inner membrane. In terms of biological role, produces ATP from ADP in the presence of a proton gradient across the membrane. This chain is ATP synthase epsilon chain, found in Hydrogenovibrio crunogenus (strain DSM 25203 / XCL-2) (Thiomicrospira crunogena).